A 315-amino-acid chain; its full sequence is ADP/ATP translocase 4 (315 aa).

Residues 1-19 lie on the Mitochondrial intermembrane side of the membrane; sequence MHREPPKKKAEKRLFDASS. A Solcar 1 repeat occupies 18–110; it reads SSFGKDLLAG…FAFKDKYKQL (93 aa). The helical transmembrane segment at 20-49 threads the bilayer; it reads FGKDLLAGGVAAAVSKTAVAPIERVKLLLQ. The Mitochondrial matrix segment spans residues 50 to 86; it reads VQASSKQISPEARYKGMVDCLVRIPREQGFFSFWRGN. The chain crosses the membrane as a helical span at residues 87 to 111; sequence LANVIRYFPTQALNFAFKDKYKQLF. Positions 92 and 104 each coordinate ADP. At 112–121 the chain is on the mitochondrial intermembrane side; sequence MSGVNKEKQF. Residues 122-142 traverse the membrane as a helical segment; it reads WRWFLANLASGGAAGATSLCV. Solcar repeat units lie at residues 123 to 213 and 220 to 307; these read RWFL…VKGL and TPFL…IKEF. Residues 143-190 are Mitochondrial matrix-facing; that stretch reads VYPLDFARTRLGVDIGKGPEERQFKGLGDCIMKIAKSDGIAGLYQGFG. A helical membrane pass occupies residues 191–211; sequence VSVQGIIVYRASYFGAYDTVK. The Mitochondrial intermembrane portion of the chain corresponds to 212–222; it reads GLLPKPKKTPF. A helical membrane pass occupies residues 223–243; it reads LVSFFIAQVVTTCSGILSYPF. At 244–283 the chain is on the mitochondrial matrix side; that stretch reads DTVRRRMMMQSGEAKRQYKGTLDCFVKIYQHEGINSFFRG. Arg247 lines the ADP pocket. Positions 247–252 are important for transport activity; it reads RRRMMM. The Nucleotide carrier signature motif signature appears at 247-252; it reads RRRMMM. Residues 284–301 form a helical membrane-spanning segment; that stretch reads AFSNVLRGTGGALVLVLY. The Mitochondrial intermembrane segment spans residues 302–315; the sequence is DKIKEFFHIDIGGR.

Belongs to the mitochondrial carrier (TC 2.A.29) family. Monomer.

The protein localises to the mitochondrion inner membrane. It localises to the membrane. The protein resides in the cell projection. It is found in the cilium. Its subcellular location is the flagellum membrane. It catalyses the reaction ADP(in) + ATP(out) = ADP(out) + ATP(in). It carries out the reaction dATP(out) + ADP(in) = dATP(in) + ADP(out). The enzyme catalyses dADP(in) + ADP(out) = dADP(out) + ADP(in). The catalysed reaction is H(+)(in) = H(+)(out). Its activity is regulated as follows. The matrix-open state (m-state) is inhibited by the membrane-permeable bongkrekic acid (BKA). The cytoplasmic-open state (c-state) is inhibited by the membrane-impermeable toxic inhibitor carboxyatractyloside (CATR). Proton transporter activity is inhibited by ADP:ATP antiporter activity. In terms of biological role, ADP:ATP antiporter that mediates import of ADP into the mitochondrial matrix for ATP synthesis, and export of ATP out to fuel the cell. Cycles between the cytoplasmic-open state (c-state) and the matrix-open state (m-state): operates by the alternating access mechanism with a single substrate-binding site intermittently exposed to either the cytosolic (c-state) or matrix (m-state) side of the inner mitochondrial membrane. Specifically required during spermatogenesis, probably to mediate ADP:ATP exchange in spermatocytes. Large ATP supplies from mitochondria may be critical for normal progression of spermatogenesis during early stages of meiotic prophase I, including DNA double-strand break repair and chromosomal synapsis. In addition to its ADP:ATP antiporter activity, also involved in mitochondrial uncoupling and mitochondrial permeability transition pore (mPTP) activity. Plays a role in mitochondrial uncoupling by acting as a proton transporter: proton transport uncouples the proton flows via the electron transport chain and ATP synthase to reduce the efficiency of ATP production and cause mitochondrial thermogenesis. Proton transporter activity is inhibited by ADP:ATP antiporter activity, suggesting that SLC25A31/ANT4 acts as a master regulator of mitochondrial energy output by maintaining a delicate balance between ATP production (ADP:ATP antiporter activity) and thermogenesis (proton transporter activity). Proton transporter activity requires free fatty acids as cofactor, but does not transport it. Among nucleotides, may also exchange ADP for dATP and dADP. Also plays a key role in mPTP opening, a non-specific pore that enables free passage of the mitochondrial membranes to solutes of up to 1.5 kDa, and which contributes to cell death. It is however unclear if SLC25A31/ANT4 constitutes a pore-forming component of mPTP or regulates it. The chain is ADP/ATP translocase 4 from Macaca fascicularis (Crab-eating macaque).